The sequence spans 320 residues: Beta-sarcoglycan (320 aa).

Low complexity predominate over residues 1–10 (MAAAAAAAAA). The interval 1–34 (MAAAAAAAAATEQQGSNGPVKKSMREKAVERRNV) is disordered. Residues 1–67 (MAAAAAAAAA…GLRGRKGNLA (67 aa)) lie on the Cytoplasmic side of the membrane. The segment covering 23–34 (SMREKAVERRNV) has biased composition (basic and acidic residues). The chain crosses the membrane as a helical; Signal-anchor for type II membrane protein span at residues 68–88 (ICVIVLLFILAVINLLITLVI). Topologically, residues 89-320 (WAVIRIGPNG…VSDNPCGNTH (232 aa)) are extracellular. Residues asparagine 160, asparagine 213, and asparagine 260 are each glycosylated (N-linked (GlcNAc...) asparagine). 2 disulfides stabilise this stretch: cysteine 290–cysteine 316 and cysteine 292–cysteine 309.

This sequence belongs to the sarcoglycan beta/delta/gamma/zeta family. In terms of assembly, cross-link to form 2 major subcomplexes: one consisting of SGCB, SGCD and SGCG and the other consisting of SGCB and SGCD. The association between SGCB and SGCG is particularly strong while SGCA is loosely associated with the other sarcoglycans. In terms of processing, disulfide bonds are present. Most strongly expressed in skeletal and heart muscle. Also detected in proliferating myoblasts.

Its subcellular location is the cell membrane. The protein resides in the sarcolemma. It is found in the cytoplasm. The protein localises to the cytoskeleton. Its function is as follows. Component of the sarcoglycan complex, a subcomplex of the dystrophin-glycoprotein complex which forms a link between the F-actin cytoskeleton and the extracellular matrix. This chain is Beta-sarcoglycan (Sgcb), found in Mus musculus (Mouse).